Consider the following 451-residue polypeptide: Probable gamma-glutamyl phosphate reductase (451 aa).

This sequence belongs to the gamma-glutamyl phosphate reductase family.

It carries out the reaction L-glutamate 5-semialdehyde + phosphate + NADP(+) = L-glutamyl 5-phosphate + NADPH + H(+). It participates in amino-acid biosynthesis; L-proline biosynthesis; L-glutamate 5-semialdehyde from L-glutamate: step 2/2. In terms of biological role, catalyzes the NADPH dependent reduction of L-gamma-glutamyl 5-phosphate into L-glutamate 5-semialdehyde and phosphate. The product spontaneously undergoes cyclization to form 1-pyrroline-5-carboxylate. This chain is Probable gamma-glutamyl phosphate reductase (pro1), found in Schizosaccharomyces pombe (strain 972 / ATCC 24843) (Fission yeast).